The chain runs to 124 residues: Small ribosomal subunit protein uS12 (124 aa).

Asp89 carries the post-translational modification 3-methylthioaspartic acid. The segment at 103-124 (DTAGVKDRRQSRSKYGAKSPKE) is disordered.

It belongs to the universal ribosomal protein uS12 family. As to quaternary structure, part of the 30S ribosomal subunit. Contacts proteins S8 and S17. May interact with IF1 in the 30S initiation complex.

Its function is as follows. With S4 and S5 plays an important role in translational accuracy. Functionally, interacts with and stabilizes bases of the 16S rRNA that are involved in tRNA selection in the A site and with the mRNA backbone. Located at the interface of the 30S and 50S subunits, it traverses the body of the 30S subunit contacting proteins on the other side and probably holding the rRNA structure together. The combined cluster of proteins S8, S12 and S17 appears to hold together the shoulder and platform of the 30S subunit. The chain is Small ribosomal subunit protein uS12 from Prochlorococcus marinus (strain NATL1A).